The sequence spans 176 residues: Large ribosomal subunit protein eL20A (176 aa).

The protein belongs to the eukaryotic ribosomal protein eL20 family. As to quaternary structure, component of the large ribosomal subunit (LSU). Mature yeast ribosomes consist of a small (40S) and a large (60S) subunit. The 40S small subunit contains 1 molecule of ribosomal RNA (18S rRNA) and at least 33 different proteins. The large 60S subunit contains 3 rRNA molecules (25S, 5.8S and 5S rRNA) and at least 46 different proteins. eL20 forms multiple interactions with RNA and proteins in the central protuberance, connecting components of core functional centers that are located far apart.

It is found in the cytoplasm. Its function is as follows. Component of the ribosome, a large ribonucleoprotein complex responsible for the synthesis of proteins in the cell. The small ribosomal subunit (SSU) binds messenger RNAs (mRNAs) and translates the encoded message by selecting cognate aminoacyl-transfer RNA (tRNA) molecules. The large subunit (LSU) contains the ribosomal catalytic site termed the peptidyl transferase center (PTC), which catalyzes the formation of peptide bonds, thereby polymerizing the amino acids delivered by tRNAs into a polypeptide chain. The nascent polypeptides leave the ribosome through a tunnel in the LSU and interact with protein factors that function in enzymatic processing, targeting, and the membrane insertion of nascent chains at the exit of the ribosomal tunnel. This Schizosaccharomyces pombe (strain 972 / ATCC 24843) (Fission yeast) protein is Large ribosomal subunit protein eL20A (rpl2001).